The chain runs to 185 residues: Large ribosomal subunit protein uL5 (185 aa).

This sequence belongs to the universal ribosomal protein uL5 family. In terms of assembly, part of the 50S ribosomal subunit; part of the 5S rRNA/L5/L18/L25 subcomplex. Contacts the 5S rRNA and the P site tRNA. Forms a bridge to the 30S subunit in the 70S ribosome.

Its function is as follows. This is one of the proteins that bind and probably mediate the attachment of the 5S RNA into the large ribosomal subunit, where it forms part of the central protuberance. In the 70S ribosome it contacts protein S13 of the 30S subunit (bridge B1b), connecting the 2 subunits; this bridge is implicated in subunit movement. Contacts the P site tRNA; the 5S rRNA and some of its associated proteins might help stabilize positioning of ribosome-bound tRNAs. The protein is Large ribosomal subunit protein uL5 of Rhizobium etli (strain ATCC 51251 / DSM 11541 / JCM 21823 / NBRC 15573 / CFN 42).